The primary structure comprises 410 residues: Metal tolerance protein 3 (410 aa).

Residues 1 to 58 are disordered; the sequence is MDGDDRRTPLLGGEGGSTRPPSLRRRDSARSLRSTFLSRLPDKVRGGGDPERPAADVD. Residues 1–114 lie on the Cytoplasmic side of the membrane; the sequence is MDGDDRRTPL…EDKEQKQSES (114 aa). The segment covering 40 to 58 has biased composition (basic and acidic residues); sequence LPDKVRGGGDPERPAADVD. Residues 115-135 form a helical membrane-spanning segment; that stretch reads AMKISNYANIILLVFKVYATI. At 136–140 the chain is on the vacuolar side; sequence KTGSM. Residues 141-161 traverse the membrane as a helical segment; sequence AIAASTLDSLLDFLAGGILYF. At 162–184 the chain is on the cytoplasmic side; sequence THLTMKSVNIYKYPIGKLRVQPV. Residues 185–205 traverse the membrane as a helical segment; that stretch reads GIIVFAAIMATLGFQVLIQAI. Topologically, residues 206-221 are vacuolar; sequence EQLVENKAGEKMTPEQ. A helical transmembrane segment spans residues 222-242; sequence LIWLYSIMLSATVVKLALYIY. The Cytoplasmic portion of the chain corresponds to 243–258; that stretch reads CRSSGNSIVQAYAKDH. The chain crosses the membrane as a helical span at residues 259-275; that stretch reads YFDVVTNVVGLVAAVLG. Residues 276-284 lie on the Vacuolar side of the membrane; the sequence is DKFFWWIDP. Residues 285–303 form a helical membrane-spanning segment; that stretch reads VGAVLLAVYTIVNWSGTVY. Residues 304-410 lie on the Cytoplasmic side of the membrane; sequence ENAVTLVGQC…VRSRLPSTEP (107 aa).

Belongs to the cation diffusion facilitator (CDF) transporter (TC 2.A.4) family. SLC30A subfamily.

The protein localises to the vacuole membrane. Involved in sequestration of excess metal in the cytoplasm into vacuoles to maintain metal homeostasis. This Oryza sativa subsp. japonica (Rice) protein is Metal tolerance protein 3 (MTP3).